Here is a 227-residue protein sequence, read N- to C-terminus: N-(5'-phosphoribosyl)anthranilate isomerase (227 aa).

Belongs to the TrpF family.

The catalysed reaction is N-(5-phospho-beta-D-ribosyl)anthranilate = 1-(2-carboxyphenylamino)-1-deoxy-D-ribulose 5-phosphate. It participates in amino-acid biosynthesis; L-tryptophan biosynthesis; L-tryptophan from chorismate: step 3/5. The polypeptide is N-(5'-phosphoribosyl)anthranilate isomerase (Herminiimonas arsenicoxydans).